We begin with the raw amino-acid sequence, 265 residues long: Silaffin-1 (265 aa).

Residues methionine 1 to alanine 19 form the signal peptide. The propeptide at glutamine 20–leucine 107 is acidic. The tract at residues serine 37–isoleucine 106 is disordered. Low complexity predominate over residues aspartate 51–glutamate 90. Residues serine 91–glutamate 103 show a composition bias toward acidic residues. The stretch at serine 108 to leucine 140 is one R1; atypical repeat. A 7 X 19 AA repeat of S-S-K-K-S-G-S-Y-S-G-S-K-G-S-K-R-R-[IL]-L region spans residues serine 108–leucine 257. Lysine 110 carries the post-translational modification N6-poly(methylaminopropyl)lysine. The residue at position 111 (lysine 111) is an N6,N6-dimethyllysine. Over residues lysine 122 to lysine 133 the composition is skewed to low complexity. Positions lysine 122–methionine 265 are disordered. Residues arginine 137–leucine 140 constitute a propeptide that is removed on maturation. An R2; atypical repeat occupies serine 141–leucine 162. Over residues serine 142–lysine 155 the composition is skewed to low complexity. At lysine 143 the chain carries N6-poly(methylaminopropyl)lysine. Residue lysine 144 is modified to N6,N6-dimethyllysine. Residue lysine 154 is modified to N6-poly(methylaminopropyl)lysine. Lysine 155 is subject to N6,N6-dimethyllysine. Positions arginine 159 to leucine 162 are excised as a propeptide. Residues serine 163 and serine 164 each carry the phosphoserine modification. The R3 repeat unit spans residues serine 163 to leucine 181. Low complexity predominate over residues serine 164–lysine 174. At lysine 165 the chain carries N6-poly(methylaminopropyl)lysine. An N6,N6-dimethyllysine modification is found at lysine 166. Phosphoserine is present on residues serine 167, serine 169, serine 171, and serine 173. An N6,N6,N6-trimethyl-5-hydroxylysine modification is found at lysine 174. At serine 176 the chain carries Phosphoserine. The residue at position 177 (lysine 177) is an N6-poly(methylaminopropyl)lysine. Positions arginine 178–leucine 181 are excised as a propeptide. 2 positions are modified to phosphoserine: serine 182 and serine 183. The R4 repeat unit spans residues serine 182 to leucine 200. The span at serine 183 to lysine 193 shows a compositional bias: low complexity. Lysine 184 is subject to N6-poly(methylaminopropyl)lysine. An N6,N6-dimethyllysine modification is found at lysine 185. 4 positions are modified to phosphoserine: serine 186, serine 188, serine 190, and serine 192. Position 193 is an N6,N6,N6-trimethyl-5-hydroxylysine (lysine 193). The residue at position 195 (serine 195) is a Phosphoserine. Lysine 196 is modified (N6-poly(methylaminopropyl)lysine). Positions arginine 197–leucine 200 are excised as a propeptide. Phosphoserine occurs at positions 201 and 202. The stretch at serine 201–leucine 219 is one R5 repeat. Low complexity predominate over residues serine 202 to lysine 212. The residue at position 203 (lysine 203) is an N6-poly(methylaminopropyl)lysine. Lysine 204 is modified (N6,N6-dimethyllysine). A phosphoserine mark is found at serine 205, serine 207, serine 209, and serine 211. Position 212 is an N6,N6,N6-trimethyl-5-hydroxylysine (lysine 212). The residue at position 214 (serine 214) is a Phosphoserine. Lysine 215 carries the post-translational modification N6-poly(methylaminopropyl)lysine. A propeptide spanning residues arginine 216–leucine 219 is cleaved from the precursor. A phosphoserine mark is found at serine 220 and serine 221. Residues serine 220–leucine 238 form an R6 repeat. Over residues serine 221–lysine 231 the composition is skewed to low complexity. Lysine 222 is modified (N6-poly(methylaminopropyl)lysine). An N6,N6-dimethyllysine modification is found at lysine 223. Phosphoserine is present on residues serine 224, serine 226, serine 228, and serine 230. Residue lysine 231 is modified to N6,N6,N6-trimethyl-5-hydroxylysine. Position 233 is a phosphoserine (serine 233). Lysine 234 bears the N6-poly(methylaminopropyl)lysine mark. The propeptide occupies arginine 235 to leucine 238. Phosphoserine occurs at positions 239 and 240. One copy of the R7 repeat lies at serine 239–leucine 257. The span at serine 240–lysine 250 shows a compositional bias: low complexity. The residue at position 241 (lysine 241) is an N6-poly(methylaminopropyl)lysine. Lysine 242 bears the N6,N6-dimethyllysine mark. Serine 243, serine 245, serine 247, and serine 249 each carry phosphoserine. N6,N6,N6-trimethyl-5-hydroxylysine is present on lysine 250. Serine 252 is subject to Phosphoserine. N6-poly(methylaminopropyl)lysine is present on lysine 253. Positions arginine 254 to methionine 265 are excised as a propeptide.

In terms of assembly, silaffin-1A peptides form large aggregates via electrostatic interactions due to intermolecular interactions between the negatively charged phosphate groups and the polyamine moieties. N6-polymethylaminopropylated. Two lysine residues of each peptide bears 6 to 11 repeats of methyl-propylamine, which gives a possible template for nucleation, and may also control the silica colloid size within the silica deposition vesicle (SDV). In terms of processing, phosphorylated. All serine residues of the Silaffin-1A1 peptide are phosphorylated. Only minor amounts of the Silaffin-1A2 peptide are phosphorylated. Phosphorylation is essential for the activity. It may represent a source of anions required for silica formation of diatoms.

Functionally, catalyzes the polymerization of silica spheres from a silicilic acid solution. It therefore plays a central role in the formation of silica cell wall of diatoms. In Cylindrotheca fusiformis (Marine diatom), this protein is Silaffin-1 (SIL1).